We begin with the raw amino-acid sequence, 390 residues long: MRYLTAGESHGPQLTTIIEGVPAGLYITEEDINFELARRQKGHGRGRRMQIETDRAKITSGVRHARTLGSPIALVVENKDWTHWTKIMGAAPITEEEESEMKRQISRPRPGHADLNGAIKYNHRDMRNVLERSSARETTVRVAAGAVAKKILAELGIKVAGHVLQIGSVKAEKTDYTSIEDLKRVTEESPVRCYDEEAGRQMMAAIDEAKANGDSIGGIVEVIVEGMPVGVGSYVHYDRKLDSKLAAAVLSINAFKGVEFGIGFEAAGKNGSEVHDEIVWDEEKGYTRATNRLGGLEGGMTTGMPIVVRGVMKPIPTLYKPLKSVDIETKEPFTASIERSDSCAVPAASVVAEAAVAWEIANAVVEQFGLDQIDRIKENVENMKKLSREF.

NADP(+)-binding residues include Arg-39 and Arg-45. Residues 132 to 134, 253 to 254, Gly-298, 313 to 317, and Arg-339 each bind FMN; these read RSS, NA, and KPIPT.

The protein belongs to the chorismate synthase family. Homotetramer. Requires FMNH2 as cofactor.

It carries out the reaction 5-O-(1-carboxyvinyl)-3-phosphoshikimate = chorismate + phosphate. It participates in metabolic intermediate biosynthesis; chorismate biosynthesis; chorismate from D-erythrose 4-phosphate and phosphoenolpyruvate: step 7/7. Catalyzes the anti-1,4-elimination of the C-3 phosphate and the C-6 proR hydrogen from 5-enolpyruvylshikimate-3-phosphate (EPSP) to yield chorismate, which is the branch point compound that serves as the starting substrate for the three terminal pathways of aromatic amino acid biosynthesis. This reaction introduces a second double bond into the aromatic ring system. The chain is Chorismate synthase from Bacillus velezensis (strain DSM 23117 / BGSC 10A6 / LMG 26770 / FZB42) (Bacillus amyloliquefaciens subsp. plantarum).